A 159-amino-acid polypeptide reads, in one-letter code: Phosphopantetheine adenylyltransferase (159 aa).

T10 is a binding site for substrate. Residues 10 to 11 and H18 contribute to the ATP site; that span reads TF. Substrate contacts are provided by K42, M74, and R88. ATP contacts are provided by residues 89-91, E99, and 124-130; these read GLR and WSFISSS.

Belongs to the bacterial CoaD family. As to quaternary structure, homohexamer. It depends on Mg(2+) as a cofactor.

The protein localises to the cytoplasm. The catalysed reaction is (R)-4'-phosphopantetheine + ATP + H(+) = 3'-dephospho-CoA + diphosphate. The protein operates within cofactor biosynthesis; coenzyme A biosynthesis; CoA from (R)-pantothenate: step 4/5. Its function is as follows. Reversibly transfers an adenylyl group from ATP to 4'-phosphopantetheine, yielding dephospho-CoA (dPCoA) and pyrophosphate. The sequence is that of Phosphopantetheine adenylyltransferase from Pectobacterium carotovorum subsp. carotovorum (strain PC1).